Reading from the N-terminus, the 254-residue chain is Probable triosephosphate isomerase 2 (254 aa).

Residue 9–11 (NMK) participates in substrate binding. Histidine 96 functions as the Electrophile in the catalytic mechanism. Glutamate 168 functions as the Proton acceptor in the catalytic mechanism. Substrate is bound by residues glycine 174 and serine 212.

The protein belongs to the triosephosphate isomerase family. As to quaternary structure, homodimer.

It localises to the cytoplasm. The catalysed reaction is D-glyceraldehyde 3-phosphate = dihydroxyacetone phosphate. It participates in carbohydrate biosynthesis; gluconeogenesis. It functions in the pathway carbohydrate degradation; glycolysis; D-glyceraldehyde 3-phosphate from glycerone phosphate: step 1/1. Involved in the gluconeogenesis. Catalyzes stereospecifically the conversion of dihydroxyacetone phosphate (DHAP) to D-glyceraldehyde-3-phosphate (G3P). This Listeria monocytogenes serovar 1/2a (strain ATCC BAA-679 / EGD-e) protein is Probable triosephosphate isomerase 2.